A 470-amino-acid chain; its full sequence is Iron-sulfur cluster assembly SufBD family protein ABCI9 (470 aa).

The protein belongs to the iron-sulfur cluster assembly SufBD family.

The chain is Iron-sulfur cluster assembly SufBD family protein ABCI9 (ABCI9) from Arabidopsis thaliana (Mouse-ear cress).